Consider the following 63-residue polypeptide: uncharacterized protein (63 aa).

This is an uncharacterized protein from Thermoproteus tenax virus 1 (strain KRA1) (TTV1).